Reading from the N-terminus, the 292-residue chain is Recombination-promoting nuclease RpnA (292 aa).

The protein belongs to the Rpn/YhgA-like nuclease family. It depends on Mg(2+) as a cofactor.

With respect to regulation, inhibited by EDTA, Zn(2+) and by Mg(2+) plus Mn(2+); stimulated by Ca(2+) in the presence of Mg(2+). A low activity DNA endonuclease yielding 3'-hydroxyl ends, equally active on ss or dsDNA, not active on dsRNA. Shows no sequence specificity. Upon expression enhances RecA-independent DNA recombination 49-fold, concomitantly reducing viability by 88% and probably inducing DNA damage as measured by induction of the SOS repair response in RecA cells. RecA-independent DNA recombination leads to replacement of recipient genes with large segments of donor DNA rather than DNA addition to the donor strain; increased expression of RpnA leads to smaller replacement segments, suggesting this protein may play a role in generating crossover events. The protein is Recombination-promoting nuclease RpnA of Escherichia coli (strain K12).